Consider the following 350-residue polypeptide: Putative ATP-binding protein BruAb2_0487 (350 aa).

In terms of domain architecture, ABC transporter spans 4–234 (VSLRGISKTF…PANKFVAGFI (231 aa)). 36 to 43 (GPSGCGKS) contacts ATP.

Belongs to the ABC transporter superfamily. As to quaternary structure, the complex is composed of two ATP-binding proteins (BruAb2_0487), two transmembrane proteins (BruAb2_0483) and a solute-binding protein (BruAb2_0484).

The protein resides in the cell inner membrane. Functionally, probably part of an ABC transporter complex. Probably responsible for energy coupling to the transport system. The polypeptide is Putative ATP-binding protein BruAb2_0487 (Brucella abortus biovar 1 (strain 9-941)).